Consider the following 346-residue polypeptide: tRNA N6-adenosine threonylcarbamoyltransferase (346 aa).

Fe cation is bound by residues H111 and H115. Substrate-binding positions include 134–138 (LVSGG), D167, G180, and N277. D305 contacts Fe cation.

This sequence belongs to the KAE1 / TsaD family. The cofactor is Fe(2+).

The protein resides in the cytoplasm. The catalysed reaction is L-threonylcarbamoyladenylate + adenosine(37) in tRNA = N(6)-L-threonylcarbamoyladenosine(37) in tRNA + AMP + H(+). Its function is as follows. Required for the formation of a threonylcarbamoyl group on adenosine at position 37 (t(6)A37) in tRNAs that read codons beginning with adenine. Is involved in the transfer of the threonylcarbamoyl moiety of threonylcarbamoyl-AMP (TC-AMP) to the N6 group of A37, together with TsaE and TsaB. TsaD likely plays a direct catalytic role in this reaction. This chain is tRNA N6-adenosine threonylcarbamoyltransferase, found in Bordetella pertussis (strain Tohama I / ATCC BAA-589 / NCTC 13251).